The following is a 175-amino-acid chain: Nucleoside-triphosphatase THEP1 (175 aa).

Residues 15–22 (GNPGVGKT) and 106–113 (VLAIDEIG) contribute to the ATP site.

This sequence belongs to the THEP1 NTPase family.

The catalysed reaction is a ribonucleoside 5'-triphosphate + H2O = a ribonucleoside 5'-diphosphate + phosphate + H(+). Functionally, has nucleotide phosphatase activity towards ATP, GTP, CTP, TTP and UTP. May hydrolyze nucleoside diphosphates with lower efficiency. The sequence is that of Nucleoside-triphosphatase THEP1 from Saccharolobus solfataricus (strain ATCC 35092 / DSM 1617 / JCM 11322 / P2) (Sulfolobus solfataricus).